The chain runs to 518 residues: MALAEEQHQNYHVAEAIPGTPGIHDVRIQPGSENSGFCVDPVGVSNVPGIRRVGLRAEIDTSPPFGSVQEAVTRFGGRGYWVPFKLDDTFNGEFDIKRMEEHAAELEKDLIVKELETLDVLEALGSTKRIVEDLKRQLQQEALRCSDQLSSDIKEMNDEHCHHNPMSSPDLILMELKQAKMNLGKTMDNLVVIQSSVESLNKKMKEEKDFLEKTRAKLTYGFGGPVSLAEELSRIKVKPQVQDEPLREQVKMVAEADETGLNLQNKNSLRTAEMRLVAARKMEEAAKAAEALAIAEITMLSSNGESQDDDSEFCFPEPPRSPVTPRGLRIDNDFSTDKSSRRGILKKLEEATEGVKQSKQALEAALNRVEIANVKQLAAENAFRGWTKDSLKGDNFTPLNHTRRSFFSHLNKHHEPLDILPKPVLKSNISMRDVLRRKQVPKEDVVAPQRQSLEGQIPRRNVNLSQMLKELKQDVKFSARGEKEEVHEEKQYVTQRRKFGFIHITLPLQKQSKKKSSL.

Coiled-coil stretches lie at residues 95–141 (DIKR…LQQE) and 188–219 (DNLV…AKLT). Residues 303–337 (NGESQDDDSEFCFPEPPRSPVTPRGLRIDNDFSTD) form a disordered region. Residues 328 to 337 (LRIDNDFSTD) are compositionally biased toward basic and acidic residues. Positions 344–375 (ILKKLEEATEGVKQSKQALEAALNRVEIANVK) form a coiled coil.

This sequence belongs to the WEB family.

This is WEB family protein At2g40480 from Arabidopsis thaliana (Mouse-ear cress).